Here is a 499-residue protein sequence, read N- to C-terminus: Cytochrome P450 77A1 (499 aa).

Cysteine 443 contributes to the heme binding site.

It belongs to the cytochrome P450 family. Requires heme as cofactor.

The polypeptide is Cytochrome P450 77A1 (CYP77A1) (Solanum melongena (Eggplant)).